The chain runs to 212 residues: Imidazole glycerol phosphate synthase subunit HisH (212 aa).

Residues 3 to 212 form the Glutamine amidotransferase type-1 domain; it reads TVAVIDYGMG…QNFAAWDGRW (210 aa). The Nucleophile role is filled by Cys81. Catalysis depends on residues His190 and Glu192.

Heterodimer of HisH and HisF.

The protein resides in the cytoplasm. It carries out the reaction 5-[(5-phospho-1-deoxy-D-ribulos-1-ylimino)methylamino]-1-(5-phospho-beta-D-ribosyl)imidazole-4-carboxamide + L-glutamine = D-erythro-1-(imidazol-4-yl)glycerol 3-phosphate + 5-amino-1-(5-phospho-beta-D-ribosyl)imidazole-4-carboxamide + L-glutamate + H(+). The enzyme catalyses L-glutamine + H2O = L-glutamate + NH4(+). It participates in amino-acid biosynthesis; L-histidine biosynthesis; L-histidine from 5-phospho-alpha-D-ribose 1-diphosphate: step 5/9. IGPS catalyzes the conversion of PRFAR and glutamine to IGP, AICAR and glutamate. The HisH subunit catalyzes the hydrolysis of glutamine to glutamate and ammonia as part of the synthesis of IGP and AICAR. The resulting ammonia molecule is channeled to the active site of HisF. This Pseudomonas syringae pv. syringae (strain B728a) protein is Imidazole glycerol phosphate synthase subunit HisH.